The following is a 95-amino-acid chain: Aspartyl/glutamyl-tRNA(Asn/Gln) amidotransferase subunit C (95 aa).

The protein belongs to the GatC family. As to quaternary structure, heterotrimer of A, B and C subunits.

The catalysed reaction is L-glutamyl-tRNA(Gln) + L-glutamine + ATP + H2O = L-glutaminyl-tRNA(Gln) + L-glutamate + ADP + phosphate + H(+). It carries out the reaction L-aspartyl-tRNA(Asn) + L-glutamine + ATP + H2O = L-asparaginyl-tRNA(Asn) + L-glutamate + ADP + phosphate + 2 H(+). In terms of biological role, allows the formation of correctly charged Asn-tRNA(Asn) or Gln-tRNA(Gln) through the transamidation of misacylated Asp-tRNA(Asn) or Glu-tRNA(Gln) in organisms which lack either or both of asparaginyl-tRNA or glutaminyl-tRNA synthetases. The reaction takes place in the presence of glutamine and ATP through an activated phospho-Asp-tRNA(Asn) or phospho-Glu-tRNA(Gln). The chain is Aspartyl/glutamyl-tRNA(Asn/Gln) amidotransferase subunit C from Nitrosococcus oceani (strain ATCC 19707 / BCRC 17464 / JCM 30415 / NCIMB 11848 / C-107).